The sequence spans 2524 residues: Highly reducing polyketide synthase Preu5 (2524 aa).

One can recognise a Ketosynthase family 3 (KS3) domain in the interval 5-426 (DTPIAIIGLS…GSNSAIVIEK (422 aa)). Catalysis depends on for beta-ketoacyl synthase activity residues C175, H310, and H350. The segment at 431-470 (DELGHETNGTNGVSVSNGVNGSNGFTNGSNGTNGHAENGN) is disordered. The span at 437-464 (TNGTNGVSVSNGVNGSNGFTNGSNGTNG) shows a compositional bias: low complexity. Residues 559–882 (VFTGQGAQYA…TYLPSLVRNV (324 aa)) form a malonyl-CoA:ACP transacylase (MAT) domain region. S648 serves as the catalytic For malonyltransferase activity. An N-terminal hotdog fold region spans residues 950–1084 (HELLGRRVVS…GQIEPEFADM (135 aa)). The PKS/mFAS DH domain occupies 950–1264 (HELLGRRVVS…FRNIGSADEN (315 aa)). The dehydratase (DH) domain stretch occupies residues 950–1266 (HELLGRRVVS…NIGSADENID (317 aa)). The active-site Proton acceptor; for dehydratase activity is the H982. The interval 1102–1264 (ADLLEHDIEG…FRNIGSADEN (163 aa)) is C-terminal hotdog fold. The Proton donor; for dehydratase activity role is filled by D1171. The interval 1418–1611 (SQAVGDLADN…IPGVWDSEVQ (194 aa)) is methyltransferase (CMet) domain. The segment at 1825–2139 (GSPDSIYFRR…SGDHLGKIVV (315 aa)) is enoylreductase (ER) domain. The tract at residues 2164–2339 (GTYLVTGGTR…HTVSIALPIV (176 aa)) is ketoreductase (KR) domain. One can recognise a Carrier domain in the interval 2445–2522 (DPLEGLTEAL…ALATDILSQR (78 aa)). S2482 is modified (O-(pantetheine 4'-phosphoryl)serine).

Requires pantetheine 4'-phosphate as cofactor.

Highly reducing polyketide synthase; part of a gene cluster that mediates the biosynthesis of a yet unidentified natural product. The chain is Highly reducing polyketide synthase Preu5 from Preussia isomera (Coprophilous fungus).